Here is a 178-residue protein sequence, read N- to C-terminus: Dual-action ribosomal maturation protein DarP (178 aa).

The span at Met1 to Asp14 shows a compositional bias: polar residues. Residues Met1–Arg25 are disordered.

The protein belongs to the DarP family.

It is found in the cytoplasm. In terms of biological role, member of a network of 50S ribosomal subunit biogenesis factors which assembles along the 30S-50S interface, preventing incorrect 23S rRNA structures from forming. Promotes peptidyl transferase center (PTC) maturation. The sequence is that of Dual-action ribosomal maturation protein DarP from Nitrosomonas europaea (strain ATCC 19718 / CIP 103999 / KCTC 2705 / NBRC 14298).